A 360-amino-acid polypeptide reads, in one-letter code: ELAV-like protein 2 (360 aa).

The interval 1–36 (METQLSNGPTCNNTANGPTTVNNNCSSPVDSGNTED) is disordered. 2 RRM domains span residues 39-117 (TNLI…YARP) and 125-205 (ANLY…FANN). Ser-221 carries the phosphoserine modification. An RRM 3 domain is found at 277–355 (WCIFVYNLAP…RVLQVSFKTN (79 aa)).

This sequence belongs to the RRM elav family. Interacts with IGF2BP1. Interacts with MAP1B light chain LC1. Brain; neural-specific. Expressed in the hippocampus.

RNA-binding protein that binds to the 3' untranslated region (3'UTR) of target mRNAs. Seems to recognize a GAAA motif. Can bind to its own 3'UTR, the FOS 3'UTR and the ID 3'UTR. The chain is ELAV-like protein 2 (Elavl2) from Mus musculus (Mouse).